The primary structure comprises 369 residues: tRNA/tmRNA (uracil-C(5))-methyltransferase (369 aa).

S-adenosyl-L-methionine-binding residues include Gln193, Tyr221, Asn226, Glu242, and Asp302. Cys327 serves as the catalytic Nucleophile. Glu361 (proton acceptor) is an active-site residue.

Belongs to the class I-like SAM-binding methyltransferase superfamily. RNA M5U methyltransferase family. TrmA subfamily.

The enzyme catalyses uridine(54) in tRNA + S-adenosyl-L-methionine = 5-methyluridine(54) in tRNA + S-adenosyl-L-homocysteine + H(+). The catalysed reaction is uridine(341) in tmRNA + S-adenosyl-L-methionine = 5-methyluridine(341) in tmRNA + S-adenosyl-L-homocysteine + H(+). In terms of biological role, dual-specificity methyltransferase that catalyzes the formation of 5-methyluridine at position 54 (m5U54) in all tRNAs, and that of position 341 (m5U341) in tmRNA (transfer-mRNA). This Actinobacillus succinogenes (strain ATCC 55618 / DSM 22257 / CCUG 43843 / 130Z) protein is tRNA/tmRNA (uracil-C(5))-methyltransferase.